A 198-amino-acid chain; its full sequence is Recombination protein RecR (198 aa).

Residues C57–C72 form a C4-type zinc finger. The Toprim domain maps to S80–P174.

This sequence belongs to the RecR family.

Its function is as follows. May play a role in DNA repair. It seems to be involved in an RecBC-independent recombinational process of DNA repair. It may act with RecF and RecO. The chain is Recombination protein RecR from Pseudomonas aeruginosa (strain LESB58).